Reading from the N-terminus, the 236-residue chain is 15,16-dihydrobiliverdin:ferredoxin oxidoreductase (236 aa).

This sequence belongs to the HY2 family.

The enzyme catalyses 15,16-dihydrobiliverdin + oxidized 2[4Fe-4S]-[ferredoxin] = biliverdin IXalpha + reduced 2[4Fe-4S]-[ferredoxin] + 2 H(+). Its function is as follows. Catalyzes the two-electron reduction of biliverdin IX-alpha at the C15 methine bridge. The polypeptide is 15,16-dihydrobiliverdin:ferredoxin oxidoreductase (Prochlorococcus marinus (strain MIT 9215)).